A 273-amino-acid chain; its full sequence is 2,3,4,5-tetrahydropyridine-2,6-dicarboxylate N-succinyltransferase (273 aa).

Belongs to the transferase hexapeptide repeat family.

The protein localises to the cytoplasm. It carries out the reaction (S)-2,3,4,5-tetrahydrodipicolinate + succinyl-CoA + H2O = (S)-2-succinylamino-6-oxoheptanedioate + CoA. It participates in amino-acid biosynthesis; L-lysine biosynthesis via DAP pathway; LL-2,6-diaminopimelate from (S)-tetrahydrodipicolinate (succinylase route): step 1/3. In Acinetobacter baumannii (strain SDF), this protein is 2,3,4,5-tetrahydropyridine-2,6-dicarboxylate N-succinyltransferase.